Consider the following 441-residue polypeptide: Probable carboxypeptidase NFIA_052450 (441 aa).

The signal sequence occupies residues 1–16 (MKPLSSLLLSAALSAA). N-linked (GlcNAc...) asparagine glycosylation is found at asparagine 88 and asparagine 150. Position 166 (aspartate 166) interacts with Zn(2+). The Proton acceptor role is filled by glutamate 198. Residue glutamate 199 participates in Zn(2+) binding. N-linked (GlcNAc...) asparagine glycosylation is found at asparagine 354 and asparagine 373.

The protein belongs to the peptidase M20A family. The cofactor is Zn(2+).

The protein localises to the secreted. The protein is Probable carboxypeptidase NFIA_052450 of Neosartorya fischeri (strain ATCC 1020 / DSM 3700 / CBS 544.65 / FGSC A1164 / JCM 1740 / NRRL 181 / WB 181) (Aspergillus fischerianus).